The sequence spans 206 residues: Protein GET1 (206 aa).

The Lumenal segment spans residues 1-4 (MPSL). Residues 5 to 24 (LITILLLNIVIYVINTIGAA) form a helical membrane-spanning segment. Residues 25–110 (TIDSLLWLFY…SFDMTVKSVR (86 aa)) lie on the Cytoplasmic side of the membrane. The stretch at 42–99 (SHMAREQRRLKREVIQLKREMNATSSQDEFAKWAKLRRRHDKALETYEAKNNELTQCK) forms a coiled coil. A helical membrane pass occupies residues 111 to 131 (WAATSGLMLFLQFWYSKRPIF). Residues 132–155 (TLPPGWIPWQVQWVLSFPRAPMGT) lie on the Lumenal side of the membrane. A helical membrane pass occupies residues 156-172 (VSIQIWGGACATVVALV). At 173–206 (GDAVGATMGFVSASKKEGMKVGAGVGEKEGKKSQ) the chain is on the cytoplasmic side.

Belongs to the WRB/GET1 family. Interacts with GET3.

Its subcellular location is the endoplasmic reticulum membrane. Functionally, required for the post-translational delivery of tail-anchored (TA) proteins to the endoplasmic reticulum. Acts as a membrane receptor for soluble GET3, which recognizes and selectively binds the transmembrane domain of TA proteins in the cytosol. The chain is Protein GET1 from Ajellomyces dermatitidis (strain ER-3 / ATCC MYA-2586) (Blastomyces dermatitidis).